A 429-amino-acid chain; its full sequence is Serine--tRNA ligase (429 aa).

Position 236–238 (236–238) interacts with L-serine; that stretch reads TAE. Position 267–269 (267–269) interacts with ATP; that stretch reads RSE. An L-serine-binding site is contributed by Glu290. 354 to 357 serves as a coordination point for ATP; sequence EISS. Residue Ser390 coordinates L-serine.

Belongs to the class-II aminoacyl-tRNA synthetase family. Type-1 seryl-tRNA synthetase subfamily. In terms of assembly, homodimer. The tRNA molecule binds across the dimer.

Its subcellular location is the cytoplasm. The catalysed reaction is tRNA(Ser) + L-serine + ATP = L-seryl-tRNA(Ser) + AMP + diphosphate + H(+). The enzyme catalyses tRNA(Sec) + L-serine + ATP = L-seryl-tRNA(Sec) + AMP + diphosphate + H(+). It functions in the pathway aminoacyl-tRNA biosynthesis; selenocysteinyl-tRNA(Sec) biosynthesis; L-seryl-tRNA(Sec) from L-serine and tRNA(Sec): step 1/1. In terms of biological role, catalyzes the attachment of serine to tRNA(Ser). Is also able to aminoacylate tRNA(Sec) with serine, to form the misacylated tRNA L-seryl-tRNA(Sec), which will be further converted into selenocysteinyl-tRNA(Sec). The sequence is that of Serine--tRNA ligase from Photorhabdus laumondii subsp. laumondii (strain DSM 15139 / CIP 105565 / TT01) (Photorhabdus luminescens subsp. laumondii).